We begin with the raw amino-acid sequence, 457 residues long: MWGGRFSEATDSFVAAFTASVGFDQRFARHDIQGSIAHATMLRECGILEADDVATIIDGLHQVLREIEAGEFNWSIALEDVHMNVESRLTDIVGAVGKKLHTGRSRNDQVATDIRLWLREETDNIIALLVRLQSGLLDLAEQHTDTIMPGFTHLQTAQPVSFGHHVMAWFEMLYRDTERLVDARRRINQMPLGSAALAGTTFPIDRTITAELLGFEGICQNSLDAVSDRDFAIEFTSAASILMMHMSRMSEEIILWMSAQFNFVQIPDRFCTGSSIMPQKKNPDVPELVRGKAARVFGQLMTLLSLMKSQPLAYNKDNQEDKEPLFDCVDTLTGSLLAFADMLPNITPNKENMRAATMKGYATATDLADYLVRRGVAFRDAHEVVGNAVALGIAEGVDLSDLSLAQLQQFSDAIGEDVFEYLTLEGSLAARDHLGGTAPNQVKQAVSRGRTRLELFA.

This sequence belongs to the lyase 1 family. Argininosuccinate lyase subfamily.

The protein localises to the cytoplasm. It catalyses the reaction 2-(N(omega)-L-arginino)succinate = fumarate + L-arginine. It functions in the pathway amino-acid biosynthesis; L-arginine biosynthesis; L-arginine from L-ornithine and carbamoyl phosphate: step 3/3. The sequence is that of Argininosuccinate lyase from Psychrobacter cryohalolentis (strain ATCC BAA-1226 / DSM 17306 / VKM B-2378 / K5).